The following is a 483-amino-acid chain: V-type proton ATPase subunit H (483 aa).

At Ser-483 the chain carries Phosphoserine.

It belongs to the V-ATPase H subunit family. As to quaternary structure, V-ATPase is a heteromultimeric enzyme made up of two complexes: the ATP-hydrolytic V1 complex and the proton translocation V0 complex. The V1 complex consists of three catalytic AB heterodimers that form a heterohexamer, three peripheral stalks each consisting of EG heterodimers, one central rotor including subunits D and F, and the regulatory subunits C and H. The proton translocation complex V0 consists of the proton transport subunit a, a ring of proteolipid subunits c9c'', rotary subunit d, subunits e and f, and the accessory subunits ATP6AP1/Ac45 and ATP6AP2/PRR. Interacts with AP2M1.

It is found in the cytoplasmic vesicle. The protein localises to the clathrin-coated vesicle membrane. Its function is as follows. Subunit of the V1 complex of vacuolar(H+)-ATPase (V-ATPase), a multisubunit enzyme composed of a peripheral complex (V1) that hydrolyzes ATP and a membrane integral complex (V0) that translocates protons. V-ATPase is responsible for acidifying and maintaining the pH of intracellular compartments and in some cell types, is targeted to the plasma membrane, where it is responsible for acidifying the extracellular environment. Subunit H is essential for V-ATPase activity, but not for the assembly of the complex. Involved in the endocytosis mediated by clathrin-coated pits, required for the formation of endosomes. The chain is V-type proton ATPase subunit H (ATP6V1H) from Sus scrofa (Pig).